The primary structure comprises 297 residues: tRNA pseudouridine synthase B (297 aa).

Catalysis depends on D44, which acts as the Nucleophile.

Belongs to the pseudouridine synthase TruB family. Type 1 subfamily.

The catalysed reaction is uridine(55) in tRNA = pseudouridine(55) in tRNA. In terms of biological role, responsible for synthesis of pseudouridine from uracil-55 in the psi GC loop of transfer RNAs. This is tRNA pseudouridine synthase B from Corynebacterium efficiens (strain DSM 44549 / YS-314 / AJ 12310 / JCM 11189 / NBRC 100395).